A 526-amino-acid chain; its full sequence is Light-independent protochlorophyllide reductase subunit B (526 aa).

[4Fe-4S] cluster is bound at residue Asp-36. Asp-290 acts as the Proton donor in catalysis. Gly-425 to Leu-426 lines the substrate pocket.

This sequence belongs to the ChlB/BchB/BchZ family. Protochlorophyllide reductase is composed of three subunits; ChlL, ChlN and ChlB. Forms a heterotetramer of two ChlB and two ChlN subunits. [4Fe-4S] cluster serves as cofactor.

It catalyses the reaction chlorophyllide a + oxidized 2[4Fe-4S]-[ferredoxin] + 2 ADP + 2 phosphate = protochlorophyllide a + reduced 2[4Fe-4S]-[ferredoxin] + 2 ATP + 2 H2O. It participates in porphyrin-containing compound metabolism; chlorophyll biosynthesis (light-independent). Functionally, component of the dark-operative protochlorophyllide reductase (DPOR) that uses Mg-ATP and reduced ferredoxin to reduce ring D of protochlorophyllide (Pchlide) to form chlorophyllide a (Chlide). This reaction is light-independent. The NB-protein (ChlN-ChlB) is the catalytic component of the complex. This chain is Light-independent protochlorophyllide reductase subunit B, found in Prochlorococcus marinus subsp. pastoris (strain CCMP1986 / NIES-2087 / MED4).